The following is a 355-amino-acid chain: MSLCTVEINLSTIKNNYLLLQDICKTSLVGAAVKANGYGLGAVQISKALIEENCRHFFVASSEEGVNLRNALGLDVNILVLNGVFEHDALELIEYNLTPVLNNLKQIEIWQKFSNLKNRLLPCYLHFNTGINRLGLSSDEIEQLINDRDLLKGLDLQYIISHLAISEEIDNPYNLEQLNRFKAYLQYFPNVKASLANSGGIFLGQDYHFDLARPGAALYGLNPLTKNPVTLKAPIIHLQNLTLDSHIGYNMTFTTKRDSVIATLPLGYADGFSRNFSNQGEVFINSRSVPIVGRVSMDLINIDVTDLPPSEIFLGQEAEIIGNYCTPDKIASIIGTIGYEVLTNLGSRYKRKYIG.

Catalysis depends on Lys34, which acts as the Proton acceptor; specific for D-alanine. Residue Lys34 is modified to N6-(pyridoxal phosphate)lysine. Arg133 lines the substrate pocket. The active-site Proton acceptor; specific for L-alanine is Tyr249. Position 297 (Met297) interacts with substrate.

Belongs to the alanine racemase family. Pyridoxal 5'-phosphate is required as a cofactor.

The enzyme catalyses L-alanine = D-alanine. It participates in amino-acid biosynthesis; D-alanine biosynthesis; D-alanine from L-alanine: step 1/1. Its function is as follows. Catalyzes the interconversion of L-alanine and D-alanine. May also act on other amino acids. This chain is Alanine racemase (alr), found in Rickettsia conorii (strain ATCC VR-613 / Malish 7).